Here is a 215-residue protein sequence, read N- to C-terminus: Ribose-5-phosphate isomerase A (215 aa).

Substrate contacts are provided by residues 26-29 (TGST), 79-82 (DGAD), and 92-95 (KGGG). Catalysis depends on Glu-101, which acts as the Proton acceptor. Lys-119 lines the substrate pocket.

It belongs to the ribose 5-phosphate isomerase family. As to quaternary structure, homodimer.

The enzyme catalyses aldehydo-D-ribose 5-phosphate = D-ribulose 5-phosphate. It functions in the pathway carbohydrate degradation; pentose phosphate pathway; D-ribose 5-phosphate from D-ribulose 5-phosphate (non-oxidative stage): step 1/1. In terms of biological role, catalyzes the reversible conversion of ribose-5-phosphate to ribulose 5-phosphate. This chain is Ribose-5-phosphate isomerase A, found in Xanthomonas axonopodis pv. citri (strain 306).